The primary structure comprises 208 residues: Neuroendocrine protein 7B2 (208 aa).

An N-terminal signal peptide occupies residues 1–26 (MGMYSAIPLALPMVLLMVYGLTPSLG). A disulfide bridge links cysteine 120 with cysteine 129. The residue at position 204 (serine 204) is a Phosphoserine.

This sequence belongs to the 7B2 family. As to quaternary structure, interacts with pcsk2 early in the secretory pathway. Dissociation occurs at later stages. Proteolytically cleaved in the Golgi by a furin-like convertase to generate bioactive peptides. Post-translationally, sulfated on tyrosine residues.

It localises to the secreted. Functionally, acts as a molecular chaperone for pcsk2, preventing its premature activation in the regulated secretory pathway. Binds to inactive pcsk2 in the endoplasmic reticulum and facilitates its transport from there to later compartments of the secretory pathway where it is proteolytically matured and activated. Also required for cleavage of pcsk2 but does not appear to be involved in its folding. The sequence is that of Neuroendocrine protein 7B2 (scg5.L) from Xenopus laevis (African clawed frog).